Here is a 500-residue protein sequence, read N- to C-terminus: MVDGPDEEFEDVPEQVRVRREKRDRILAAGGEAYPVSVPRTDSLADLRERYAHLEAGEETTDQVGVTGRVVFLRGTGKLAFATLQEGDGTRLQVMVSRDGVGEDALAAWKSDVDLGDIVFVHGNVISSRRGELSVLADSWRMASKSLRPLPVLHKELSEETRVRQRYVDLIVREAARTNVRARSNVVRALRRTLEDRGFLEVETPMLQTLHGGASARPFVTRSNAFDTELYLRIAPELFLKRCVVGGIERVFEINRNFRNEGADSTHSPEFAMLETYQAWGDYDSIGELTRALVQNAATEAFGTQLVTLADGSEYDLGGEWTSISMYPSLSASLGEEITPETPREHLIGIAERLGISVDTVRWTHGKLVEELWEHRIADSLHSPTFVRDFPVETSPLVRGHRELPGVVEKWDLYVRGFELATGYSELVDPVVQRERFVEQARLADLGDDEAMRIDEDFLRAQEHGMPPTGGMGMGIDRLLMALTGLGIRETITFPLVKPR.

2 residues coordinate Mg(2+): aspartate 412 and glutamate 419.

It belongs to the class-II aminoacyl-tRNA synthetase family. Homodimer. Mg(2+) is required as a cofactor.

It localises to the cytoplasm. The enzyme catalyses tRNA(Lys) + L-lysine + ATP = L-lysyl-tRNA(Lys) + AMP + diphosphate. The protein is Lysine--tRNA ligase of Kineococcus radiotolerans (strain ATCC BAA-149 / DSM 14245 / SRS30216).